We begin with the raw amino-acid sequence, 249 residues long: Protein TIFY 10B (249 aa).

In terms of domain architecture, Tify spans 113–148; it reads PESQSAPLTIFYGGRVMVFDDFSAEKAKEVIDLANK. The Jas motif lies at 204–229; that stretch reads PIARRASLHRFLEKRKDRITSKAPYQ. The Nuclear localization signal motif lies at 206-213; the sequence is ARRASLHR. Positions 225–249 are disordered; the sequence is KAPYQIDGSAEASSKPTNPAWLSSR. Polar residues predominate over residues 235 to 249; sequence EASSKPTNPAWLSSR.

The protein belongs to the TIFY/JAZ family. Homo- and heterodimer. Interacts with COI1, MYC2, MYC3, MYC4, AFPH2/NINJA, TIFY10A/JAZ1, TIFY6B/JAZ3, TIFY11A/JAZ5, TIFY11B/JAZ6, TIFY5A/JAZ8, TIFY7/JAZ9, TIFY9/JAZ10, TIFY3A/JAZ11 and TIFY3B/JAZ12. Interacts with RHD6 and RSL1. As to quaternary structure, (Microbial infection) Interacts with the pathogenic Pseudomonas syringae HopZ1a protein. (Microbial infection) Acetylated by Pseudomonas syringae HopZ1a. In terms of processing, ubiquitinated. Targeted for degradation by the SCF(COI1) E3 ubiquitin ligase-proteasome pathway during jasmonate signaling. Expressed in cotyledons, hypocotyls, roots, sepals, petal vascular tissue and stigmas of developing flowers. Expressed in stamen filaments after jasmonic acid treatment.

The protein resides in the nucleus. Repressor of jasmonate responses. Jasmonoyl-isoleucine (JA-Ile) specifically promotes COI1-TIFY10B/JAZ2 interaction. Activated by MYC2, MYC3 and MYC4 transcription factors. Interacts with and suppresses RHD6 and RSL1 transcription factor activities to negatively regulate jasmonate-stimulated root hair development. This chain is Protein TIFY 10B, found in Arabidopsis thaliana (Mouse-ear cress).